Reading from the N-terminus, the 89-residue chain is Small ribosomal subunit protein uS15 (89 aa).

It belongs to the universal ribosomal protein uS15 family. Part of the 30S ribosomal subunit. Forms a bridge to the 50S subunit in the 70S ribosome, contacting the 23S rRNA.

Its function is as follows. One of the primary rRNA binding proteins, it binds directly to 16S rRNA where it helps nucleate assembly of the platform of the 30S subunit by binding and bridging several RNA helices of the 16S rRNA. Forms an intersubunit bridge (bridge B4) with the 23S rRNA of the 50S subunit in the ribosome. The protein is Small ribosomal subunit protein uS15 of Klebsiella pneumoniae subsp. pneumoniae (strain ATCC 700721 / MGH 78578).